The primary structure comprises 287 residues: 2-dehydro-3-deoxyphosphooctonate aldolase (287 aa).

Belongs to the KdsA family.

It localises to the cytoplasm. It catalyses the reaction D-arabinose 5-phosphate + phosphoenolpyruvate + H2O = 3-deoxy-alpha-D-manno-2-octulosonate-8-phosphate + phosphate. It participates in carbohydrate biosynthesis; 3-deoxy-D-manno-octulosonate biosynthesis; 3-deoxy-D-manno-octulosonate from D-ribulose 5-phosphate: step 2/3. Its pathway is bacterial outer membrane biogenesis; lipopolysaccharide biosynthesis. This Rhodopseudomonas palustris (strain HaA2) protein is 2-dehydro-3-deoxyphosphooctonate aldolase.